A 664-amino-acid chain; its full sequence is Glycine--tRNA ligase beta subunit (664 aa).

The protein belongs to the class-II aminoacyl-tRNA synthetase family. Tetramer of two alpha and two beta subunits.

It localises to the cytoplasm. It catalyses the reaction tRNA(Gly) + glycine + ATP = glycyl-tRNA(Gly) + AMP + diphosphate. The sequence is that of Glycine--tRNA ligase beta subunit from Rickettsia felis (strain ATCC VR-1525 / URRWXCal2) (Rickettsia azadi).